Consider the following 282-residue polypeptide: Aldo-keto reductase BQ2027_MB2996 (282 aa).

Residue tyrosine 57 is the Proton donor of the active site. Residues leucine 197, valine 235, arginine 237, serine 238, alanine 239, arginine 243, serine 246, asparagine 247, and arginine 273 each contribute to the NADPH site.

It belongs to the aldo/keto reductase family.

In Mycobacterium bovis (strain ATCC BAA-935 / AF2122/97), this protein is Aldo-keto reductase BQ2027_MB2996.